The chain runs to 502 residues: Tryptophan decarboxylase TDC1 (502 aa).

Positions 1–18 are enriched in polar residues; sequence MGSLDSNYDTESPASVGQ. Residues 1–21 form a disordered region; it reads MGSLDSNYDTESPASVGQFNP. Lys-319 carries the N6-(pyridoxal phosphate)lysine modification.

It belongs to the group II decarboxylase family. Pyridoxal 5'-phosphate serves as cofactor. Highly expressed in apex. Expressed in young stem and bark tissues. Expressed at low levels in leaves, fruits and seeds.

It carries out the reaction L-tryptophan + H(+) = tryptamine + CO2. In terms of biological role, involved in the biosynthesis of tryptamine. Supplies tryptamine for the indole moiety of camptothecin (CPT), an anti-cancer monoterpene alkaloid. Represents a key step in monoterpene indole alkaloid biosynthesis. Is specific for tryptophan, and inactive against tyrosine, phenylalanine and 3,4-dihydroxyphenylalanine (dopa). The chain is Tryptophan decarboxylase TDC1 from Camptotheca acuminata (Happy tree).